The primary structure comprises 151 residues: D-aminoacyl-tRNA deacylase (151 aa).

A Gly-cisPro motif, important for rejection of L-amino acids motif is present at residues 139–140; it reads GP.

The protein belongs to the DTD family. In terms of assembly, homodimer.

It localises to the cytoplasm. It catalyses the reaction glycyl-tRNA(Ala) + H2O = tRNA(Ala) + glycine + H(+). The enzyme catalyses a D-aminoacyl-tRNA + H2O = a tRNA + a D-alpha-amino acid + H(+). Functionally, an aminoacyl-tRNA editing enzyme that deacylates mischarged D-aminoacyl-tRNAs. Also deacylates mischarged glycyl-tRNA(Ala), protecting cells against glycine mischarging by AlaRS. Acts via tRNA-based rather than protein-based catalysis; rejects L-amino acids rather than detecting D-amino acids in the active site. By recycling D-aminoacyl-tRNA to D-amino acids and free tRNA molecules, this enzyme counteracts the toxicity associated with the formation of D-aminoacyl-tRNA entities in vivo and helps enforce protein L-homochirality. This Symbiobacterium thermophilum (strain DSM 24528 / JCM 14929 / IAM 14863 / T) protein is D-aminoacyl-tRNA deacylase.